The primary structure comprises 229 residues: Ras-related protein RabZ (229 aa).

A disordered region spans residues 1 to 39 (MGCFHSREPTATGKTKKEEPTSAVKTNKEEKSSNYVSEP). Glycine 2 carries N-myristoyl glycine lipidation. Cysteine 3 is lipidated: S-palmitoyl cysteine. A compositionally biased stretch (basic and acidic residues) spans 15–32 (TKKEEPTSAVKTNKEEKS). 57 to 64 (GDQATGKS) provides a ligand contact to GTP. The short motif at 79 to 88 (HKPSPIIIDC) is the Effector region element. GTP is bound by residues 106–110 (DTAGQ) and 164–167 (NKCD).

Belongs to the small GTPase superfamily. Rab family. In terms of processing, although this sequence lacks the C-terminal cysteine motifs subject to isoprenylation in other Rab proteins, it does have N-terminal myristoylation and S-palmitoylation sequence motifs.

This is Ras-related protein RabZ (rabZ) from Dictyostelium discoideum (Social amoeba).